The sequence spans 510 residues: ATP synthase subunit alpha (510 aa).

Position 169 to 176 (169 to 176 (GDRQTGKT)) interacts with ATP.

It belongs to the ATPase alpha/beta chains family. In terms of assembly, F-type ATPases have 2 components, CF(1) - the catalytic core - and CF(0) - the membrane proton channel. CF(1) has five subunits: alpha(3), beta(3), gamma(1), delta(1), epsilon(1). CF(0) has three main subunits: a(1), b(2) and c(9-12). The alpha and beta chains form an alternating ring which encloses part of the gamma chain. CF(1) is attached to CF(0) by a central stalk formed by the gamma and epsilon chains, while a peripheral stalk is formed by the delta and b chains.

It is found in the cell inner membrane. The catalysed reaction is ATP + H2O + 4 H(+)(in) = ADP + phosphate + 5 H(+)(out). Produces ATP from ADP in the presence of a proton gradient across the membrane. The alpha chain is a regulatory subunit. The protein is ATP synthase subunit alpha of Afipia carboxidovorans (strain ATCC 49405 / DSM 1227 / KCTC 32145 / OM5) (Oligotropha carboxidovorans).